The following is a 198-amino-acid chain: Large ribosomal subunit protein bL25 (198 aa).

This sequence belongs to the bacterial ribosomal protein bL25 family. CTC subfamily. Part of the 50S ribosomal subunit; part of the 5S rRNA/L5/L18/L25 subcomplex. Contacts the 5S rRNA. Binds to the 5S rRNA independently of L5 and L18.

Its function is as follows. This is one of the proteins that binds to the 5S RNA in the ribosome where it forms part of the central protuberance. The polypeptide is Large ribosomal subunit protein bL25 (Nitrosomonas europaea (strain ATCC 19718 / CIP 103999 / KCTC 2705 / NBRC 14298)).